Here is a 328-residue protein sequence, read N- to C-terminus: Small neutral protease regulatory protein (328 aa).

The region spanning 1–60 is the HTH lysR-type domain; sequence MELEVRHLRALCAIADAGSLHRAARRLGVAQPTLSTQLTRIEQALGGPLFTRERTGCRPT. Residues 20-39 constitute a DNA-binding region (H-T-H motif); sequence LHRAARRLGVAQPTLSTQLT.

It belongs to the LysR transcriptional regulatory family.

In terms of biological role, transcriptional trans-activator of the gene (mprA) for the small neutral protease. The polypeptide is Small neutral protease regulatory protein (mprR) (Streptomyces coelicolor (strain ATCC BAA-471 / A3(2) / M145)).